The chain runs to 368 residues: Protein Wnt-1 (368 aa).

The first 25 residues, 1-25, serve as a signal peptide directing secretion; the sequence is MRGPALLLALRALCALSALRGTARA. 11 disulfides stabilise this stretch: cysteine 91–cysteine 102, cysteine 141–cysteine 149, cysteine 151–cysteine 168, cysteine 216–cysteine 230, cysteine 218–cysteine 225, cysteine 297–cysteine 328, cysteine 313–cysteine 323, cysteine 327–cysteine 367, cysteine 343–cysteine 358, cysteine 345–cysteine 355, and cysteine 350–cysteine 351. The O-palmitoleoyl serine; by PORCN moiety is linked to residue serine 222.

Belongs to the Wnt family. Forms a soluble 1:1 complex with AFM; this prevents oligomerization and is required for prolonged biological activity. The complex with AFM may represent the physiological form in body fluids. Interacts with PORCN. In terms of processing, N-glycosylated. N-glycosylation favors subsequent palmitoleoylation. Palmitoleoylation is required for efficient binding to frizzled receptors. Palmitoleoylation is necessary for proper trafficking to cell surface. Depalmitoleoylated by NOTUM, leading to inhibit Wnt signaling pathway.

Its subcellular location is the secreted. The protein resides in the extracellular space. It is found in the extracellular matrix. Functionally, ligand for members of the frizzled family of seven transmembrane receptors. Acts in the canonical Wnt signaling pathway by promoting beta-catenin-dependent transcriptional activation. Developmental protein that promotes cell proliferation in the developing spinal cord. Has a role in osteoblast function, bone development and bone homeostasis. The sequence is that of Protein Wnt-1 (WNT1) from Gallus gallus (Chicken).